The chain runs to 462 residues: uncharacterized protein (462 aa).

2 consecutive transmembrane segments (helical) span residues W12 to V32 and G257 to V277.

It belongs to the HHV-5 US29 protein family.

The protein resides in the host membrane. This is an uncharacterized protein from Human cytomegalovirus (strain AD169) (HHV-5).